The sequence spans 620 residues: Probably inactive leucine-rich repeat receptor-like protein kinase At5g48380 (620 aa).

The first 27 residues, 1-27, serve as a signal peptide directing secretion; sequence MMMGRLVFVIWLYNCLCLLLLSSLVDA. The Extracellular segment spans residues 28 to 228; the sequence is DQANIDCLRT…SASSSRGKVV (201 aa). N56, N111, N119, and N147 each carry an N-linked (GlcNAc...) asparagine glycan. LRR repeat units follow at residues 101 to 124, 126 to 148, 150 to 172, and 174 to 196; these read DLTGLDLSRNNFSGPLPANISTLI, LVTILDLSYNSFSGEIPMLISNI, FLNTLMLQHNQFTGTLPPQLAQL, and RLKTFSVSDNRLVGPIPNFNQTL. N-linked (GlcNAc...) asparagine glycosylation is present at N193. The chain crosses the membrane as a helical span at residues 229–249; it reads IIAAVGGLTAAALVVGVVLFF. Residues 250-620 lie on the Cytoplasmic side of the membrane; it reads YFRKLGAVRK…DFIEELIVAR (371 aa). A Phosphothreonine modification is found at T300. A Protein kinase domain is found at 303 to 596; sequence FKKDNIIATG…RAIGESYNFT (294 aa). ATP-binding positions include 309–317 and K331; that span reads IATGRTGTM. Position 463 is a phosphothreonine (T463). Y479 carries the post-translational modification Phosphotyrosine. Residue T482 is modified to Phosphothreonine.

Belongs to the protein kinase superfamily. Ser/Thr protein kinase family.

It localises to the cell membrane. The chain is Probably inactive leucine-rich repeat receptor-like protein kinase At5g48380 from Arabidopsis thaliana (Mouse-ear cress).